A 637-amino-acid polypeptide reads, in one-letter code: Chaperone protein DnaK (637 aa).

Thr-196 is modified (phosphothreonine; by autocatalysis). Disordered stretches follow at residues 503–525 (AEIN…RKEE) and 598–637 (SGAG…DDKK). Residues 598 to 619 (SGAGAAQAQPEAPQNSGSSQSS) are compositionally biased toward low complexity.

The protein belongs to the heat shock protein 70 family.

Acts as a chaperone. In Chlorobium chlorochromatii (strain CaD3), this protein is Chaperone protein DnaK.